A 422-amino-acid polypeptide reads, in one-letter code: Proton-gated ion channel subunit pbo-6 (422 aa).

A signal peptide spans 1–20; the sequence is MQCSFLTIFIFITTVTVGVA. At 21–233 the chain is on the extracellular side; sequence EFSEQYQGSS…IKVARKPFYY (213 aa). Cys-151 and Cys-165 are disulfide-bonded. Transmembrane regions (helical) follow at residues 234-254, 268-288, and 294-314; these read LISLVVPSYIICVLSIAGLFA, LGVTAILSMAVLSLVVTEKVP, and VPLLIVYMHFIIVMVTIATIL. Residues 315–378 are Cytoplasmic-facing; sequence TSTVMRVHAK…GEVSRRMDYL (64 aa). A helical membrane pass occupies residues 379–399; it reads LASVFIIIISTPTLYLFYMCF.

This sequence belongs to the ligand-gated ion channel (TC 1.A.9) family. Acetylcholine receptor (TC 1.A.9.1) subfamily. In terms of assembly, the functional channel is a hetero-oligomer of pbo-5 and pbo-6. As to expression, expressed in the posterior body muscles.

The protein resides in the membrane. Its function is as follows. Forms a proton-gated ion channel with pbo-5 that is activated by acidification of the posterior coelomic space, leading to posterior body wall muscle contraction (pBoc) during the defecation cycle. Not necessary for stimulation of posterior body contraction (pBoc). Does not bind neurotransmitters such as acetylcholine, gamma-aminobutyric acid, glycine, serotonin, glutamate or choline. The chain is Proton-gated ion channel subunit pbo-6 from Caenorhabditis elegans.